The chain runs to 133 residues: ATP synthase epsilon chain, chloroplastic (133 aa).

The protein belongs to the ATPase epsilon chain family. As to quaternary structure, F-type ATPases have 2 components, CF(1) - the catalytic core - and CF(0) - the membrane proton channel. CF(1) has five subunits: alpha(3), beta(3), gamma(1), delta(1), epsilon(1). CF(0) has three main subunits: a, b and c.

The protein localises to the plastid. It is found in the chloroplast thylakoid membrane. Its function is as follows. Produces ATP from ADP in the presence of a proton gradient across the membrane. This is ATP synthase epsilon chain, chloroplastic from Jasminum nudiflorum (Winter jasmine).